A 561-amino-acid polypeptide reads, in one-letter code: DNA ligase (561 aa).

Glu249 provides a ligand contact to ATP. Lys251 (N6-AMP-lysine intermediate) is an active-site residue. Residues Arg256, Arg271, Glu301, Phe340, Arg417, and Lys423 each contribute to the ATP site.

The protein belongs to the ATP-dependent DNA ligase family. Mg(2+) serves as cofactor.

The catalysed reaction is ATP + (deoxyribonucleotide)n-3'-hydroxyl + 5'-phospho-(deoxyribonucleotide)m = (deoxyribonucleotide)n+m + AMP + diphosphate.. Its function is as follows. DNA ligase that seals nicks in double-stranded DNA during DNA replication, DNA recombination and DNA repair. The polypeptide is DNA ligase (Methanothermobacter thermautotrophicus (strain ATCC 29096 / DSM 1053 / JCM 10044 / NBRC 100330 / Delta H) (Methanobacterium thermoautotrophicum)).